The chain runs to 242 residues: Biosynthetic peptidoglycan transglycosylase (242 aa).

A helical membrane pass occupies residues 19-39 (ILAALAVFWGGGIALFSVVPV).

It belongs to the glycosyltransferase 51 family.

Its subcellular location is the cell inner membrane. The catalysed reaction is [GlcNAc-(1-&gt;4)-Mur2Ac(oyl-L-Ala-gamma-D-Glu-L-Lys-D-Ala-D-Ala)](n)-di-trans,octa-cis-undecaprenyl diphosphate + beta-D-GlcNAc-(1-&gt;4)-Mur2Ac(oyl-L-Ala-gamma-D-Glu-L-Lys-D-Ala-D-Ala)-di-trans,octa-cis-undecaprenyl diphosphate = [GlcNAc-(1-&gt;4)-Mur2Ac(oyl-L-Ala-gamma-D-Glu-L-Lys-D-Ala-D-Ala)](n+1)-di-trans,octa-cis-undecaprenyl diphosphate + di-trans,octa-cis-undecaprenyl diphosphate + H(+). It functions in the pathway cell wall biogenesis; peptidoglycan biosynthesis. In terms of biological role, peptidoglycan polymerase that catalyzes glycan chain elongation from lipid-linked precursors. In Salmonella paratyphi B (strain ATCC BAA-1250 / SPB7), this protein is Biosynthetic peptidoglycan transglycosylase.